A 429-amino-acid chain; its full sequence is GTPase Obg (429 aa).

Residues 1–158 (MFVDQVKIYV…RNVQLELKVL (158 aa)) enclose the Obg domain. A disordered region spans residues 124 to 145 (RGNKRFATPANPAPELSENGEP). Residues 159–329 (ADVGLVGFPS…LLLAIADKLE (171 aa)) form the OBG-type G domain. GTP-binding positions include 165–172 (GFPSVGKS), 190–194 (FTTIV), 212–215 (DLPG), 282–285 (NKMD), and 310–312 (SAV). Serine 172 and threonine 192 together coordinate Mg(2+). One can recognise an OCT domain in the interval 351–429 (KYVAEEPDFE…LLDYEFEFMD (79 aa)).

The protein belongs to the TRAFAC class OBG-HflX-like GTPase superfamily. OBG GTPase family. As to quaternary structure, monomer. Mg(2+) serves as cofactor.

Its subcellular location is the cytoplasm. Its function is as follows. An essential GTPase which binds GTP, GDP and possibly (p)ppGpp with moderate affinity, with high nucleotide exchange rates and a fairly low GTP hydrolysis rate. Plays a role in control of the cell cycle, stress response, ribosome biogenesis and in those bacteria that undergo differentiation, in morphogenesis control. The chain is GTPase Obg from Listeria monocytogenes serotype 4b (strain F2365).